Here is a 100-residue protein sequence, read N- to C-terminus: Urease subunit gamma (100 aa).

Belongs to the urease gamma subunit family. As to quaternary structure, heterotrimer of UreA (gamma), UreB (beta) and UreC (alpha) subunits. Three heterotrimers associate to form the active enzyme.

The protein resides in the cytoplasm. The catalysed reaction is urea + 2 H2O + H(+) = hydrogencarbonate + 2 NH4(+). The protein operates within nitrogen metabolism; urea degradation; CO(2) and NH(3) from urea (urease route): step 1/1. This Burkholderia thailandensis (strain ATCC 700388 / DSM 13276 / CCUG 48851 / CIP 106301 / E264) protein is Urease subunit gamma.